The sequence spans 325 residues: L-lactate dehydrogenase (325 aa).

Residues Val21, Asp42, Lys47, Tyr73, and 87–88 each bind NAD(+); that span reads GA. Substrate is bound by residues Gln90, Arg96, and 128 to 131; that span reads NPVD. NAD(+)-binding positions include 126–128 and Ser151; that span reads ATN. Substrate is bound at residue 156-159; it reads DTAR. Arg161 and His176 together coordinate beta-D-fructose 1,6-bisphosphate. His183 serves as the catalytic Proton acceptor. Tyr228 carries the post-translational modification Phosphotyrosine. Thr237 is a binding site for substrate.

The protein belongs to the LDH/MDH superfamily. LDH family. As to quaternary structure, homotetramer.

The protein resides in the cytoplasm. It catalyses the reaction (S)-lactate + NAD(+) = pyruvate + NADH + H(+). It functions in the pathway fermentation; pyruvate fermentation to lactate; (S)-lactate from pyruvate: step 1/1. Its activity is regulated as follows. Allosterically activated by fructose 1,6-bisphosphate (FBP). Catalyzes the conversion of lactate to pyruvate. This Shouchella clausii (strain KSM-K16) (Alkalihalobacillus clausii) protein is L-lactate dehydrogenase.